The sequence spans 379 residues: ATP-sensitive inward rectifier potassium channel 10 (379 aa).

The Cytoplasmic portion of the chain corresponds to 1–61 (MTSVAKVYYS…LKDLWTTFID (61 aa)). 1,2-dioctanoyl-sn-glycero-3-phospho-(1D-myo-inositol-4,5-bisphosphate) is bound at residue Arg36. Residues 62 to 88 (MQWRYKLLLFSATFAGTWFLFGVVWYL) form a helical membrane-spanning segment. The Extracellular segment spans residues 89–114 (VAVAHGDLLELGPPANHTPCVVQVHT). A disulfide bridge connects residues Cys108 and Cys140. Residues 115 to 131 (LTGAFLFSLESQTTIGY) constitute an intramembrane region (discontinuously helical; Pore-forming). The short motif at 128–133 (TIGYGF) is the Selectivity filter element. The Extracellular segment spans residues 132 to 140 (GFRYISEEC). The helical transmembrane segment at 141-166 (PLAIVLLIAQLVLTTILEIFITGTFL) threads the bilayer. Residues 167-379 (AKIARPKKRA…SALSVRISNV (213 aa)) are Cytoplasmic-facing. Positions 168, 171, and 173 each coordinate 1,2-dioctanoyl-sn-glycero-3-phospho-(1D-myo-inositol-4,5-bisphosphate). 210-217 (GCQVTGKL) provides a ligand contact to ATP.

The protein belongs to the inward rectifier-type potassium channel (TC 1.A.2.1) family. KCNJ10 subfamily. In terms of assembly, homotetramer. In kidney cells, it forms heteromeric channels with Kir5.1/KCNJ16; this interaction is required for KCNJ16 localization to the basolateral membrane. Interacts with MAGI1, alone and possibly as a heteromer with KCNJ16; this interaction may facilitate KCNJ10/KCNJ16 potassium channel expression at the basolateral membrane in kidney cells. Interacts with PATJ. As to expression, predominantly expressed in the brain, including in glial cells of the cerebellum and forebrain. Expressed at lower levels in the kidney, and other peripheral tissues.

It is found in the membrane. The protein resides in the basolateral cell membrane. It catalyses the reaction K(+)(in) = K(+)(out). Its activity is regulated as follows. Channel activity is strongly regulated by variations of cytosolic pH; channels are activated by alkaline and inhibited by acidic pH values. Activated by phosphatidylinositol 4,5 biphosphate (PtdIns(4,5)P2). Inhibited by Ba(2+) and Cs(+). In terms of biological role, may be responsible for potassium buffering action of glial cells in the brain. Inward rectifier potassium channels are characterized by a greater tendency to allow potassium to flow into the cell rather than out of it. Their voltage dependence is regulated by the concentration of extracellular potassium; as external potassium is raised, the voltage range of the channel opening shifts to more positive voltages. The inward rectification is mainly due to the blockage of outward current by internal magnesium. Can be blocked by extracellular barium and cesium. In the kidney, together with KCNJ16, mediates basolateral K(+) recycling in distal tubules; this process is critical for Na(+) reabsorption at the tubules. This Rattus norvegicus (Rat) protein is ATP-sensitive inward rectifier potassium channel 10.